A 122-amino-acid chain; its full sequence is Acidic phospholipase A2 CTs-A3 (122 aa).

Disulfide bonds link C26/C116, C28/C44, C43/C95, C49/C122, C50/C88, C57/C81, and C75/C86. Y27, G29, and G31 together coordinate Ca(2+). The active site involves H47. A Ca(2+)-binding site is contributed by D48. The active site involves D89.

Ca(2+) serves as cofactor. Expressed by the venom gland.

It is found in the secreted. It carries out the reaction a 1,2-diacyl-sn-glycero-3-phosphocholine + H2O = a 1-acyl-sn-glycero-3-phosphocholine + a fatty acid + H(+). Its function is as follows. Snake venom phospholipase A2 (PLA2) that shows a moderate inhibition of ADP-induced human platelet aggregation when tested on platelet rich plasma. Exhibits moderate hydrolytic activities and prefers the anionic micelles (dPPC with deoxycholate) to the zwitterionic micelles (dPPC with Triton X-100). PLA2 catalyzes the calcium-dependent hydrolysis of the 2-acyl groups in 3-sn-phosphoglycerides. The chain is Acidic phospholipase A2 CTs-A3 from Trimeresurus stejnegeri (Chinese green tree viper).